Reading from the N-terminus, the 274-residue chain is Large ribosomal subunit protein uL2 (274 aa).

2 disordered regions span residues 35 to 55 and 224 to 274; these read FGKK…RHRG and AMNP…KLKG. Positions 45 to 55 are enriched in basic residues; the sequence is NHGRITTRHRG. Over residues 263–274 the composition is skewed to basic and acidic residues; it reads KSSDKYIKKLKG.

The protein belongs to the universal ribosomal protein uL2 family. Part of the 50S ribosomal subunit. Forms a bridge to the 30S subunit in the 70S ribosome.

Its function is as follows. One of the primary rRNA binding proteins. Required for association of the 30S and 50S subunits to form the 70S ribosome, for tRNA binding and peptide bond formation. It has been suggested to have peptidyltransferase activity; this is somewhat controversial. Makes several contacts with the 16S rRNA in the 70S ribosome. The chain is Large ribosomal subunit protein uL2 from Wolbachia pipientis subsp. Culex pipiens (strain wPip).